Here is a 245-residue protein sequence, read N- to C-terminus: 1-(5-phosphoribosyl)-5-[(5-phosphoribosylamino)methylideneamino] imidazole-4-carboxamide isomerase (245 aa).

Catalysis depends on aspartate 7, which acts as the Proton acceptor. The active-site Proton donor is the aspartate 129.

This sequence belongs to the HisA/HisF family.

The protein resides in the cytoplasm. The catalysed reaction is 1-(5-phospho-beta-D-ribosyl)-5-[(5-phospho-beta-D-ribosylamino)methylideneamino]imidazole-4-carboxamide = 5-[(5-phospho-1-deoxy-D-ribulos-1-ylimino)methylamino]-1-(5-phospho-beta-D-ribosyl)imidazole-4-carboxamide. The protein operates within amino-acid biosynthesis; L-histidine biosynthesis; L-histidine from 5-phospho-alpha-D-ribose 1-diphosphate: step 4/9. The chain is 1-(5-phosphoribosyl)-5-[(5-phosphoribosylamino)methylideneamino] imidazole-4-carboxamide isomerase from Shewanella baltica (strain OS223).